A 266-amino-acid polypeptide reads, in one-letter code: Protein YdcF (266 aa).

It to S.coelicolor SCO4629. In terms of assembly, monomer.

Its function is as follows. Binds S-adenosyl-L-methionine (AdoMet). The protein is Protein YdcF (ydcF) of Escherichia coli (strain K12).